We begin with the raw amino-acid sequence, 468 residues long: Anthocyanidin 3-O-glucoside 2'''-O-xylosyltransferase (468 aa).

UDP-alpha-D-xylose contacts are provided by residues S284, 344-346 (IQQ), 361-369 (HCGFGSMWE), and 383-386 (HGEQ).

This sequence belongs to the UDP-glycosyltransferase family.

The enzyme catalyses an anthocyanidin 3-O-beta-D-glucoside + UDP-alpha-D-xylose = an anthocyanidin 3-O-beta-D-sambubioside + UDP + 2 H(+). Its pathway is secondary metabolite biosynthesis; flavonoid biosynthesis. Its function is as follows. Contributes to the last few anthocyanin biosynthetic steps. Converts cyanidin 3-O-glucoside to cyanidin 3-O-xylosyl(1-&gt;2)glucoside. Can use 3-O-glucosylated anthocyanidins/flavonols and uridine diphosphate (UDP)-xylose as substrates. This is Anthocyanidin 3-O-glucoside 2'''-O-xylosyltransferase (A3G2XYLT) from Arabidopsis thaliana (Mouse-ear cress).